The following is a 556-amino-acid chain: Arginine--tRNA ligase (556 aa).

The short motif at 133-143 (ANPTGPIHIGH) is the 'HIGH' region element.

The protein belongs to the class-I aminoacyl-tRNA synthetase family. Monomer.

It localises to the cytoplasm. The enzyme catalyses tRNA(Arg) + L-arginine + ATP = L-arginyl-tRNA(Arg) + AMP + diphosphate. The polypeptide is Arginine--tRNA ligase (Dehalococcoides mccartyi (strain ATCC BAA-2100 / JCM 16839 / KCTC 5957 / BAV1)).